We begin with the raw amino-acid sequence, 371 residues long: Zinc finger CCCH domain-containing protein 21 (371 aa).

The tract at residues 1–64 is disordered; it reads MPPKQQPKAD…AAKKKKEEEK (64 aa). A compositionally biased stretch (basic and acidic residues) spans 10–23; it reads DLAKKQKQVEDKTF. Over residues 34–46 the composition is skewed to polar residues; that stretch reads VQKYVQSLKQSVQ. C3H1-type zinc fingers lie at residues 88–115 and 159–197; these read DPKS…HDLN and KPTD…HALP. Coiled-coil stretches lie at residues 205–237 and 283–317; these read QMKA…ATQM and FVDD…GTSK. A disordered region spans residues 290-371; it reads CEEYEREREQ…IREPNDEGSS (82 aa). Residues 292 to 312 show a composition bias toward basic and acidic residues; the sequence is EYEREREQEETEQKAKNKEAE. The span at 330–352 shows a compositional bias: acidic residues; the sequence is NEEEEDDDDDDDDLDMDELDELE.

The polypeptide is Zinc finger CCCH domain-containing protein 21 (Arabidopsis thaliana (Mouse-ear cress)).